An 802-amino-acid polypeptide reads, in one-letter code: Epithelial sodium channel subunit delta (802 aa).

The Cytoplasmic segment spans residues 1 to 250; it reads MRAVLSQKTT…CSRGNRLKTT (250 aa). The disordered stretch occupies residues 145 to 211; the sequence is KQPHGGALTS…PPPPKEGHQE (67 aa). The segment covering 166 to 176 has biased composition (basic residues); that stretch reads CHLKGWQHRPT. The segment covering 192–205 has biased composition (pro residues); the sequence is PPRPGPPSAPPPPP. A helical membrane pass occupies residues 251–271; it reads SWGLLSLGALVALCWQLGLLF. Topologically, residues 272 to 694 are extracellular; it reads ERHWHRPVLM…VPQLLSAMGS (423 aa). 2 N-linked (GlcNAc...) asparagine glycosylation sites follow: Asn-330 and Asn-548. Residues 695–715 traverse the membrane as a helical segment; that stretch reads LCSLWFGASVLSLLELLELLL. The Cytoplasmic portion of the chain corresponds to 716 to 802; sequence DASALTLVLG…GPQPLETLDT (87 aa). The interval 738-777 is disordered; it reads RASPASGASSIKPEASQMPPPAGGTSDDPEPSGPHLPRVM.

It belongs to the amiloride-sensitive sodium channel (TC 1.A.6) family. SCNN1D subfamily. Can form an alternative heterotrimeric epithelial sodium channel (ENaC), composed of a delta (SCNN1D), beta (SCNN1B), and gamma (SCNN1G) subunit, where the delta (SCNN1D) subunit replaces the alpha (SCNN1A) subunit. As to expression, not specifically expressed in epithelial cells.

It localises to the apical cell membrane. The catalysed reaction is Na(+)(in) = Na(+)(out). Originally identified and characterized by its inhibition by the diuretic drug amiloride. Its function is as follows. Potential alternative pore-forming subunit of the epithelial sodium channel (ENaC), capable of replacing the alpha/SCNN1A subunit, creating a more active channel with distinct properties. ENaC functions in epithelial tissues, where it facilitates the electrodiffusion of sodium ions from the extracellular fluid through the apical membrane of cells, with water following osmotically, regulating sodium balance and fluid homeostasis. This subunit could also function independently as a sodium channel or assemble into other tissue-specific heterotrimeric sodium channels. ENaC channels including this isoform exhibit greater conductance. The protein is Epithelial sodium channel subunit delta of Homo sapiens (Human).